The following is a 670-amino-acid chain: Sodium/glucose cotransporter 2 (670 aa).

At 1 to 20 (MEGHVEEGSELGEQKVLIDN) the chain is on the extracellular side. A helical transmembrane segment spans residues 21-42 (PADILVIAAYFLLVIGVGLWSM). Over 43–61 (FRTNRGTVGGYFLAGRSMV) the chain is Cytoplasmic. The helical transmembrane segment at 62–83 (WWPVGASLFASNIGSGHFVGLA) threads the bilayer. Residues A71 and I74 each contribute to the Na(+) site. Residues 84–91 (GTGAASGL) lie on the Extracellular side of the membrane. The chain crosses the membrane as a helical span at residues 92–112 (AVAGFEWNALFVVLLLGWLFV). The Cytoplasmic portion of the chain corresponds to 113 to 134 (PVYLTAGVITMPQYLRKRFGGR). Residues 135–164 (RIRLYLSVLSLFLYIFTKISVDMFSGAVFI) form a helical membrane-spanning segment. The Extracellular segment spans residues 165-171 (QQALGWN). 2 consecutive transmembrane segments (helical) span residues 172–193 (IYAS…GGLA) and 194–215 (ALMY…ILTG). Topologically, residues 216–273 (YAFHEVGGYSGLFDKYLGAVTSLTVSKDPAVGNISSTCYQPRPDSYHLLRDPVTGGLP) are extracellular. The N-linked (GlcNAc...) asparagine glycan is linked to N248. 4 disulfides stabilise this stretch: C253/C509, C343/C349, C353/C359, and C515/C520. A helical transmembrane segment spans residues 274–293 (WPALLLGLTIVSGWHWCSDQ). The Cytoplasmic portion of the chain corresponds to 294–307 (VIVQRCLAGKNLTH). A helical membrane pass occupies residues 308–329 (IKAGCILCGYLKLMPMFLMVMP). At 330–373 (GMISRILYPDEVACVVPEVCKRVCGTEVGCSNIAYPRLVVKLMP) the chain is on the extracellular side. A helical transmembrane segment spans residues 374 to 404 (NGLRGLMLAVMLAALMSSLASIFNSSSTLFT). The Na(+) site is built by A387, S390, and S391. Over 405-422 (MDIYTRLRPRAGDRELLL) the chain is Cytoplasmic. The chain crosses the membrane as a helical span at residues 423–444 (VGRLWVVFIVAVSVAWLPVVQA). Topologically, residues 445-449 (AQGGQ) are extracellular. Residues 450–475 (LFDYIQSVSSYLAPPVSAVFVLALFV) traverse the membrane as a helical segment. The Cytoplasmic segment spans residues 476 to 480 (PRVNE). A helical membrane pass occupies residues 481–503 (KGAFWGLIGGLLMGLARLIPEFF). Topologically, residues 504-521 (FGTGSCVRPSACPAIFCR) are extracellular. The chain crosses the membrane as a helical span at residues 522–545 (VHYLYFAIILFFCSGFLTLAISRC). Over 546–649 (TAPIPQKHLH…DISEDPSWAR (104 aa)) the chain is Cytoplasmic. The chain crosses the membrane as a helical span at residues 650-668 (VVNLNALLMMTVAVFLWGF). Residues 669 to 670 (YA) are Extracellular-facing.

This sequence belongs to the sodium:solute symporter (SSF) (TC 2.A.21) family. Forms a heterodimer (via TM13) with PDZK1IP1 (via N-terminal transmembrane helix); this interaction enhances SLC5A2 transporter activity. Glycosylated at a single site. Kidney, in proximal tubule S1 segments.

The protein resides in the apical cell membrane. It catalyses the reaction D-glucose(out) + Na(+)(out) = D-glucose(in) + Na(+)(in). With respect to regulation, enhanced by the interaction with PDZK1IP1/MAP17. Functionally, electrogenic Na(+)-coupled sugar symporter that actively transports D-glucose at the plasma membrane, with a Na(+) to sugar coupling ratio of 1:1. Transporter activity is driven by a transmembrane Na(+) electrochemical gradient set by the Na(+)/K(+) pump. Unlike SLC5A1/SGLT1, requires the auxiliary protein PDZK1IP1/MAP17 for full transporter activity. Has a primary role in D-glucose reabsorption from glomerular filtrate across the brush border of the early proximal tubules of the kidney. The chain is Sodium/glucose cotransporter 2 (Slc5a2) from Rattus norvegicus (Rat).